Here is a 117-residue protein sequence, read N- to C-terminus: Minor capsid protein p17 (117 aa).

An N-linked (GlcNAc...) asparagine; by host glycan is attached at N12. A helical membrane pass occupies residues 39–59; the sequence is AILLGILILLVIILIIVAIVY. Residues N61 and N97 are each glycosylated (N-linked (GlcNAc...) asparagine; by host).

It belongs to the asfivirus minor capsid protein p17 family. In terms of assembly, interacts with the minor capsid protein M1249L and with the hexon capsid protein p72 capsomers; these interactions form a rigid zipper structure that stabilizes the capsomers. Interacts with host STING1.

The protein resides in the virion membrane. It localises to the host endoplasmic reticulum membrane. It is found in the host Golgi apparatus membrane. Functionally, together with the penton and the other minor capsid proteins (M1249L, p49), forms a complicated network immediately below the outer capsid shell, stabilizing the whole capsid. Three copies of p17 encircle each p72 capsomer in the inner capsid shell, anchoring p72 capsomers on the inner membrane. Required for the assembly of the capsid and icosahedral morphogenesis. Additionally, inhibits the host cGAS-STING pathway through its interaction with STING1 and subsequent interference of the recruitment of downstream components TBK1 and IKBKE. This African swine fever virus (strain Badajoz 1971 Vero-adapted) (Ba71V) protein is Minor capsid protein p17.